The chain runs to 307 residues: Pantothenate kinase (307 aa).

90 to 97 (GSVAVGKS) provides a ligand contact to ATP.

It belongs to the prokaryotic pantothenate kinase family.

Its subcellular location is the cytoplasm. It catalyses the reaction (R)-pantothenate + ATP = (R)-4'-phosphopantothenate + ADP + H(+). It participates in cofactor biosynthesis; coenzyme A biosynthesis; CoA from (R)-pantothenate: step 1/5. The sequence is that of Pantothenate kinase from Levilactobacillus brevis (strain ATCC 367 / BCRC 12310 / CIP 105137 / JCM 1170 / LMG 11437 / NCIMB 947 / NCTC 947) (Lactobacillus brevis).